The following is a 299-amino-acid chain: Protein NSG2 (299 aa).

Residues 1 to 108 (MANRGEPDPK…PSRTRQTRQN (108 aa)) lie on the Cytoplasmic side of the membrane. Ser-90 carries the phosphoserine modification. A helical membrane pass occupies residues 109 to 129 (ILHYLQAVLILSLSGFAYHEL). At 130–161 (SRNLHDNHLLHPDFASRPLLLGVKLCNWLSNG) the chain is on the lumenal side. Residues 162 to 182 (VLPNWLGYGVEGLLFGSVVPI) traverse the membrane as a helical segment. At 183–237 (LDNIFQTEVVKSSVHHDSLTSVIRSINAMLGVTFGIRKIQWNSSLQAAGAWGLLN) the chain is on the cytoplasmic side. The chain crosses the membrane as a helical span at residues 238 to 258 (IILWLFFDGSISMLMSCICIG). The Lumenal segment spans residues 259–268 (VGCCISCYKD). Residues 269–289 (IIDGSQFLYFMDFYFLGSLMF) form a helical membrane-spanning segment. The Cytoplasmic portion of the chain corresponds to 290–299 (GKLGRYLYSH).

Belongs to the INSIG family.

The protein resides in the endoplasmic reticulum membrane. Functionally, stabilizes the HMG-CoA reductase HMG2 by preventing its HRD1-dependent degradation. Binds directly to the sterol-sensing domain (SSD)-containing transmembrane region of HMG2, promoting its folding to protect it from degradation. This is Protein NSG2 (NSG2) from Saccharomyces cerevisiae (strain ATCC 204508 / S288c) (Baker's yeast).